Consider the following 378-residue polypeptide: Quinolinate synthase (378 aa).

Positions 59 and 80 each coordinate iminosuccinate. Cysteine 125 is a binding site for [4Fe-4S] cluster. Iminosuccinate contacts are provided by residues tyrosine 151–asparagine 153 and serine 168. Cysteine 212 contacts [4Fe-4S] cluster. Residues histidine 238 to glutamate 240 and threonine 255 each bind iminosuccinate. Cysteine 309 contacts [4Fe-4S] cluster.

It belongs to the quinolinate synthase family. Type 1 subfamily. [4Fe-4S] cluster is required as a cofactor.

The protein resides in the cytoplasm. It catalyses the reaction iminosuccinate + dihydroxyacetone phosphate = quinolinate + phosphate + 2 H2O + H(+). It participates in cofactor biosynthesis; NAD(+) biosynthesis; quinolinate from iminoaspartate: step 1/1. Catalyzes the condensation of iminoaspartate with dihydroxyacetone phosphate to form quinolinate. In Burkholderia mallei (strain NCTC 10247), this protein is Quinolinate synthase.